A 389-amino-acid chain; its full sequence is Chalcone synthase J (389 aa).

The active site involves Cys164.

It belongs to the thiolase-like superfamily. Chalcone/stilbene synthases family.

The catalysed reaction is (E)-4-coumaroyl-CoA + 3 malonyl-CoA + 3 H(+) = 2',4,4',6'-tetrahydroxychalcone + 3 CO2 + 4 CoA. Its pathway is secondary metabolite biosynthesis; flavonoid biosynthesis. In terms of biological role, the primary product of this enzyme is 4,2',4',6'-tetrahydroxychalcone (also termed naringenin-chalcone or chalcone) which can under specific conditions spontaneously isomerize into naringenin. This chain is Chalcone synthase J (CHSJ), found in Petunia hybrida (Petunia).